We begin with the raw amino-acid sequence, 520 residues long: Cytochrome P450 monooxygenase btcC (520 aa).

Residues 2–22 (IFLLTLAGLKVLSIVILFGII) traverse the membrane as a helical segment. Asn-177 is a glycosylation site (N-linked (GlcNAc...) asparagine). Heme is bound at residue Cys-448. Asn-511 carries N-linked (GlcNAc...) asparagine glycosylation.

It belongs to the cytochrome P450 family. Heme is required as a cofactor.

The protein localises to the membrane. It participates in secondary metabolite biosynthesis; terpenoid biosynthesis. Cytochrome P4590 monooxygenase part of the gene cluster that mediates the biosynthesis of betaestacins. The bifunctional terpene synthase btcA converts isopentenyl diphosphate (IPP) and dimethylallyl diphosphate (DMAPP) into the sesterterpene betaestacin I. The C-terminal prenyltransferase (PT) domain of btcA catalyzes formation of GFPP, whereas the N-terminal terpene cyclase (TC) domain catalyzes the cyclization of GFPP into betaestacin I. The cytochrome P450 monooxygenase btcB oxidizes the C25 methyl group of betaestacin I to yield the carboxylic acid betaestacin IV via the alcohol betaestacin III. The cytochrome P450 monooxygenase btcC further catalyzes the multistep oxidation of betaestacin IV to produce several compounds, including betaestacins Va, Vb, Vc and VI. The chain is Cytochrome P450 monooxygenase btcC from Colletotrichum orbiculare (strain 104-T / ATCC 96160 / CBS 514.97 / LARS 414 / MAFF 240422) (Cucumber anthracnose fungus).